The following is a 416-amino-acid chain: 3-phosphoshikimate 1-carboxyvinyltransferase (416 aa).

3-phosphoshikimate is bound by residues lysine 20, serine 21, and arginine 25. Phosphoenolpyruvate is bound at residue lysine 20. Glycine 88 and arginine 116 together coordinate phosphoenolpyruvate. The 3-phosphoshikimate site is built by serine 159, serine 160, glutamine 161, serine 186, aspartate 300, and lysine 327. Glutamine 161 provides a ligand contact to phosphoenolpyruvate. Aspartate 300 acts as the Proton acceptor in catalysis. Phosphoenolpyruvate is bound by residues arginine 331 and arginine 373.

It belongs to the EPSP synthase family. Monomer.

The protein resides in the cytoplasm. The catalysed reaction is 3-phosphoshikimate + phosphoenolpyruvate = 5-O-(1-carboxyvinyl)-3-phosphoshikimate + phosphate. The protein operates within metabolic intermediate biosynthesis; chorismate biosynthesis. Functionally, catalyzes the transfer of the enolpyruvyl moiety of phosphoenolpyruvate (PEP) to the 5-hydroxyl of shikimate-3-phosphate (S3P) to produce enolpyruvyl shikimate-3-phosphate and inorganic phosphate. The sequence is that of 3-phosphoshikimate 1-carboxyvinyltransferase from Archaeoglobus fulgidus (strain ATCC 49558 / DSM 4304 / JCM 9628 / NBRC 100126 / VC-16).